The chain runs to 561 residues: Cytochrome P450 monooxygenase iboC (561 aa).

A helical transmembrane segment spans residues 8 to 28 (RFYYQLLAAVLIPALFVAWAA). Cysteine 484 contacts heme.

The protein belongs to the cytochrome P450 family. The cofactor is heme.

Its subcellular location is the membrane. The protein operates within secondary metabolite biosynthesis. In terms of biological role, cytochrome P450 monooxygenase; part of the gene cluster that mediates the biosynthesis of the psychoactive metabolites ibotenic acid and muscimol. The first committed step is glutamate hydroxylation by the 2-oxoglutarate-dependent dioxygenase iboH, and the last step is decarboxylation of ibotenic acid to muscimol by the decarboxylase iboD. The order of the intermediate reactions is somewhat ambiguous. IboA likely activates the carboxylic acid at position 5 to introduce an amide bond, and the flavin monooxygenase iboF generates the N-O bond. There are several options for the latter step. One option is that iboF directly hydroxylates the amide nitrogen formed by iboA to produce a hydroxamic acid species. Another option is that iboF hydroxylates an external N-containing compound, whose resulting N-O bond is subsequently introduced into the hydroxyglutamate scaffold. The paralogous PLP-dependent cystathionine gamma-synthase-like enzymes iboG1 and iboG2 are likely involved in substitution of the OH group at position 3 by the O-N moiety. The first cyclic intermediate is most probably tricholomic acid which is likely desaturated to ibotenic acid by the cytochrome P450 monooxygenase iboC. This is Cytochrome P450 monooxygenase iboC from Amanita muscaria (strain Koide BX008).